Here is a 188-residue protein sequence, read N- to C-terminus: Large ribosomal subunit protein eL18z (188 aa).

Belongs to the eukaryotic ribosomal protein eL18 family.

The protein is Large ribosomal subunit protein eL18z (RPL18A) of Arabidopsis thaliana (Mouse-ear cress).